Reading from the N-terminus, the 416-residue chain is Carboxypeptidase B (416 aa).

The N-terminal stretch at Met1–His15 is a signal peptide. The propeptide at Tyr16–Pro109 is activation peptide. Residues Lys117–Val411 enclose the Peptidase M14 domain. Zn(2+)-binding residues include His175 and Glu178. Substrate is bound by residues His175–Glu178, Arg233, and Thr250–Arg251. Disulfide bonds link Cys244–Cys267 and Cys258–Cys272. His303 provides a ligand contact to Zn(2+). Substrate-binding positions include Ser304–Tyr305 and Tyr355. Glu377 serves as the catalytic Proton donor/acceptor.

The protein belongs to the peptidase M14 family. Zn(2+) serves as cofactor.

Its subcellular location is the secreted. It localises to the zymogen granule lumen. The enzyme catalyses Preferential release of a C-terminal lysine or arginine amino acid.. This is Carboxypeptidase B (CPB1) from Canis lupus familiaris (Dog).